The sequence spans 1098 residues: Gramicidin S synthase 1 (1098 aa).

A Carrier domain is found at 538 to 612; it reads APRNEIEETL…QLVHYIKDSK (75 aa). Ser-573 is modified (O-(pantetheine 4'-phosphoryl)serine).

Belongs to the ATP-dependent AMP-binding enzyme family. Large multienzyme complex of GrsA and GrsB. Requires pantetheine 4'-phosphate as cofactor.

The enzyme catalyses L-phenylalanine + ATP + H2O = D-phenylalanine + AMP + diphosphate + H(+). It participates in antibiotic biosynthesis; gramicidin S biosynthesis. In terms of biological role, in the first step of peptide synthesis this enzyme activates phenylalanine and racemizes it to the D-isomer. The chain is Gramicidin S synthase 1 (grsA) from Brevibacillus brevis (Bacillus brevis).